The following is a 55-amino-acid chain: Myrmicitoxin(1)-Pr6b (55 aa).

Residues 1-22 form the signal peptide; the sequence is MKIIYAFLLIAVVAFMGSGIMA. A propeptide spanning residues 23 to 29 is cleaved from the precursor; that stretch reads ESLAEAI.

The protein belongs to the formicidae venom clade 4 family. In terms of tissue distribution, expressed by the venom gland.

The protein localises to the secreted. Functionally, probable neurotoxin. In Pogonomyrmex rugosus (Desert harvester ant), this protein is Myrmicitoxin(1)-Pr6b.